The following is a 189-amino-acid chain: Notch ligand osm-11 (189 aa).

Residues 1 to 18 (MNFITVAALAIVMVLAQA) form the signal peptide.

May interact with lin-12/Notch receptor. In terms of tissue distribution, expressed in coelomocytes (at protein level).

The protein localises to the apical cell membrane. Probable secreted lin-12/Notch ligand or co-ligand involved in the mediation of Notch signaling. Involved in the lin-12/Notch pathway signaling of cell fate in vulval precursor cells (VPCs), acting redundantly with dsl-1 and lag-2. Required for normal octanol avoidance response, acting via both lin-12/Notch and glp-1/Notch signaling pathways in neurons, in concert with lag-2. Involved in regulation of sleep-like quiescence during the larval to adult transition, acting via Notch receptor activation and in parallel with EGF signaling. The protein is Notch ligand osm-11 of Caenorhabditis elegans.